Consider the following 256-residue polypeptide: Diaminopimelate epimerase (256 aa).

N11 and N63 together coordinate substrate. The active-site Proton donor is the C72. Substrate is bound by residues 73 to 74, N169, and 187 to 188; these read GN and ER. The active-site Proton acceptor is C197. 198 to 199 is a binding site for substrate; the sequence is GT.

This sequence belongs to the diaminopimelate epimerase family. In terms of assembly, homodimer.

The protein resides in the cytoplasm. The catalysed reaction is (2S,6S)-2,6-diaminopimelate = meso-2,6-diaminopimelate. Its pathway is amino-acid biosynthesis; L-lysine biosynthesis via DAP pathway; DL-2,6-diaminopimelate from LL-2,6-diaminopimelate: step 1/1. Its function is as follows. Catalyzes the stereoinversion of LL-2,6-diaminopimelate (L,L-DAP) to meso-diaminopimelate (meso-DAP), a precursor of L-lysine and an essential component of the bacterial peptidoglycan. In Flavobacterium psychrophilum (strain ATCC 49511 / DSM 21280 / CIP 103535 / JIP02/86), this protein is Diaminopimelate epimerase.